The sequence spans 201 residues: UPF0301 protein Avi_1069 (201 aa).

It belongs to the UPF0301 (AlgH) family.

In Allorhizobium ampelinum (strain ATCC BAA-846 / DSM 112012 / S4) (Agrobacterium vitis (strain S4)), this protein is UPF0301 protein Avi_1069.